The following is an 81-amino-acid chain: Sulfur carrier protein TusA (81 aa).

Residue C19 is the Cysteine persulfide intermediate of the active site.

It belongs to the sulfur carrier protein TusA family. In terms of assembly, interacts with IscS.

The protein resides in the cytoplasm. It functions in the pathway tRNA modification. Functionally, sulfur carrier protein involved in sulfur trafficking in the cell. Part of a sulfur-relay system required for 2-thiolation during synthesis of 2-thiouridine of the modified wobble base 5-methylaminomethyl-2-thiouridine (mnm(5)s(2)U) in tRNA. Interacts with IscS and stimulates its cysteine desulfurase activity. Accepts an activated sulfur from IscS, which is then transferred to TusD, and thus determines the direction of sulfur flow from IscS to 2-thiouridine formation. Also appears to be involved in sulfur transfer for the biosynthesis of molybdopterin. This Escherichia coli O17:K52:H18 (strain UMN026 / ExPEC) protein is Sulfur carrier protein TusA.